Reading from the N-terminus, the 406-residue chain is Argininosuccinate synthase (406 aa).

Residues 11–19 (AYSGGLDTS) and Ala38 each bind ATP. Positions 91 and 96 each coordinate L-citrulline. Gly121 provides a ligand contact to ATP. Positions 123, 127, and 128 each coordinate L-aspartate. An L-citrulline-binding site is contributed by Asn127. Positions 131, 181, 190, 266, and 278 each coordinate L-citrulline.

The protein belongs to the argininosuccinate synthase family. Type 1 subfamily. Homotetramer.

It localises to the cytoplasm. It carries out the reaction L-citrulline + L-aspartate + ATP = 2-(N(omega)-L-arginino)succinate + AMP + diphosphate + H(+). Its pathway is amino-acid biosynthesis; L-arginine biosynthesis; L-arginine from L-ornithine and carbamoyl phosphate: step 2/3. This is Argininosuccinate synthase from Campylobacter curvus (strain 525.92).